The sequence spans 69 residues: UPF0337 protein YjbJ (69 aa).

The protein belongs to the UPF0337 (CsbD) family.

In Escherichia coli O6:H1 (strain CFT073 / ATCC 700928 / UPEC), this protein is UPF0337 protein YjbJ (yjbJ).